Here is a 561-residue protein sequence, read N- to C-terminus: Chaperonin GroEL 1 (561 aa).

ATP-binding positions include 29-32 (TMGP), 86-90 (DGTTT), Gly413, and Asp495.

The protein belongs to the chaperonin (HSP60) family. In terms of assembly, forms a cylinder of 14 subunits composed of two heptameric rings stacked back-to-back. Interacts with the co-chaperonin GroES.

Its subcellular location is the cytoplasm. The enzyme catalyses ATP + H2O + a folded polypeptide = ADP + phosphate + an unfolded polypeptide.. In terms of biological role, together with its co-chaperonin GroES, plays an essential role in assisting protein folding. The GroEL-GroES system forms a nano-cage that allows encapsulation of the non-native substrate proteins and provides a physical environment optimized to promote and accelerate protein folding. This is Chaperonin GroEL 1 from Trichodesmium erythraeum (strain IMS101).